The primary structure comprises 200 residues: THO complex subunit tho5 (200 aa).

This sequence belongs to the THOC5 family. Component of the THO and TREX complexes.

The protein resides in the cytoplasm. It localises to the nucleus. Functionally, component the THO subcomplex of the TREX complex, which operates in coupling transcription elongation to mRNA export. The THO complex is recruited to transcribed genes and moves along the gene with the elongating polymerase during transcription. THO is important for stabilizing nascent RNA in the RNA polymerase II elongation complex by preventing formation of DNA:RNA hybrids behind the elongating polymerase. The THO complex is also required to maintain TRAMP complex occupancy at sites of snoRNA transcription thus promoting exosome-mediated degradation of snoRNA precursors. The protein is THO complex subunit tho5 of Schizosaccharomyces pombe (strain 972 / ATCC 24843) (Fission yeast).